The primary structure comprises 636 residues: Polyadenylate-binding protein 1 (636 aa).

An N-acetylmethionine modification is found at Met1. 4 consecutive RRM domains span residues 11–89 (ASLY…WSQR), 99–175 (GNIF…RFKS), 191–268 (TNVY…RAQK), and 294–370 (VNLY…LAQR). The tract at residues 166–289 (RKVFVGRFKS…FEQMKQDRIT (124 aa)) is CSDE1-binding. Lys299 bears the N6-methyllysine mark. At Ser315 the chain carries Phosphoserine. At Thr319 the chain carries Phosphothreonine. Omega-N-methylarginine is present on residues Arg385, Arg419, Arg432, and Arg436. Omega-N-methylated arginine; by CARM1 is present on residues Arg455 and Arg460. Residues Arg475 and Arg481 each carry the omega-N-methylarginine modification. Arg493 carries the post-translational modification Asymmetric dimethylarginine; alternate. Arg493 is subject to Dimethylated arginine; alternate. The residue at position 493 (Arg493) is an Omega-N-methylarginine; alternate. An Omega-N-methylarginine modification is found at Arg506. N6-acetyllysine is present on Lys512. Omega-N-methylarginine is present on Arg518. The 78-residue stretch at 542-619 (QEPLTASMLA…AVAVLQAHQA (78 aa)) folds into the PABC domain.

The protein belongs to the polyadenylate-binding protein type-1 family. As to quaternary structure, may form homodimers. Component of a multisubunit autoregulatory ribonucleoprotein complex (ARC), at least composed of IGF2BP1, PABPC1 and CSDE1. Directly interacts with IGF2BP1. Part of a complex associated with the FOS mCRD domain and consisting of HNRPD, SYNCRIP, PAIP1 and CSDE1/UNR. Interacts with PAIP1 and PAIP2 (via the PABPC1-interacting motifs PAM1 and PAM2). Interacts with PAIP1 with a 1:1 stoichiometry and with PAIP2 with a 1:2 stoichiometry. The interaction with CSDE1 is direct and RNA-independent. Found in a mRNP complex with YBX2. Interacts with TENT2/GLD2. Identified in the spliceosome C complex. Identified in a mRNP complex, at least composed of DHX9, DDX3X, ELAVL1, HNRNPU, IGF2BP1, ILF3, PABPC1, PCBP2, PTBP2, STAU1, STAU2, SYNCRIP and YBX1. The interaction with DDX3X is direct and RNA-independent. This interaction increases in stressed cells and decreases during cell recovery. Identified in a IGF2BP1-dependent mRNP granule complex containing untranslated mRNAs. Interacts with NXF1/TAP. Interacts with PIWIL1. Interacts with AGO1, AGO2, GSPT1 and GSPT2. Interacts with LARP4B. Interacts (via the second and third RRM domains and the C-terminus) with PAIP2B (via central acidic portion and C-terminus). Forms a complex with LARP1 and SHFL. Interacts with LARP4. Interacts with ZFC3H1 in a RNase-sensitive manner. Interacts with TRIM71 (via NHL repeats) in an RNA-dependent manner. Interacts with TENT5C; the interaction has no effect on TENT5C poly(A) polymerase function. Interacts with G3BP1 and G3BP2. Interacts with ENDOV; the interaction is RNA-dependent and stimulates ENDOV activity. Interacts with UPF1; the interaction is RNA-dependent. Interacts with IGF2BP2 and IGF2BP3. May interact with SETX. Interacts with RBM46. Interacts with PAN3. Post-translationally, phosphorylated by MAPKAPK2. In terms of processing, methylated by CARM1. Arg-493 is dimethylated, probably to asymmetric dimethylarginine.

The protein localises to the cytoplasm. It localises to the stress granule. The protein resides in the nucleus. Its subcellular location is the cell projection. It is found in the lamellipodium. Binds the poly(A) tail of mRNA, including that of its own transcript, and regulates processes of mRNA metabolism such as pre-mRNA splicing and mRNA stability. Its function in translational initiation regulation can either be enhanced by PAIP1 or repressed by PAIP2. Can probably bind to cytoplasmic RNA sequences other than poly(A) in vivo. Binds to N6-methyladenosine (m6A)-containing mRNAs and contributes to MYC stability by binding to m6A-containing MYC mRNAs. Involved in translationally coupled mRNA turnover. Implicated with other RNA-binding proteins in the cytoplasmic deadenylation/translational and decay interplay of the FOS mRNA mediated by the major coding-region determinant of instability (mCRD) domain. Involved in regulation of nonsense-mediated decay (NMD) of mRNAs containing premature stop codons; for the recognition of premature termination codons (PTC) and initiation of NMD a competitive interaction between UPF1 and PABPC1 with the ribosome-bound release factors is proposed. By binding to long poly(A) tails, may protect them from uridylation by ZCCHC6/ZCCHC11 and hence contribute to mRNA stability. The polypeptide is Polyadenylate-binding protein 1 (PABPC1) (Pongo abelii (Sumatran orangutan)).